The following is a 1393-amino-acid chain: DNA glycosylase/AP lyase ROS1 (1393 aa).

Disordered regions lie at residues 1-25 (MEKQ…MKPF), 98-186 (SLSS…TSTR), and 237-265 (LSAP…SNLE). Residues 98 to 108 (SLSSVSNNVAE) show a composition bias toward low complexity. Residues 117-126 (PKRKKHRPKV) are compositionally biased toward basic residues. 2 stretches are compositionally biased toward basic and acidic residues: residues 127 to 138 (RREAKPKREPKP) and 162 to 171 (KKVEVSKDQD). Positions 243–256 (PKRKRSQGKRKGVQ) are enriched in basic residues. The tract at residues 528–626 (KVDLDDETDR…AFMSLASQFP (99 aa)) is DEMETER. Residues 653-672 (EETMSSPPDHNHSSVTLKNT) are compositionally biased toward polar residues. Disordered regions lie at residues 653 to 722 (EETM…SVEV) and 789 to 830 (SNQV…CSQQ). The segment covering 687–698 (SRSSSEIAISAH) has biased composition (low complexity). Over residues 699-722 (ESVDKTTDSKEYVDSDRKGSSVEV) the composition is skewed to basic and acidic residues. Over residues 816 to 830 (KSSVDSSEPGCCSQQ) the composition is skewed to polar residues. Lysine 901 participates in a covalent cross-link: Glycyl lysine isopeptide (Lys-Gly) (interchain with G-Cter in ubiquitin). Residues cysteine 1038, cysteine 1045, cysteine 1048, and cysteine 1054 each contribute to the [4Fe-4S] cluster site.

This sequence belongs to the DNA glycosylase family. DEMETER subfamily. Interacts (via the central region) with ZDP. Binds to RPA2A. Interacts with XRCC1. Interacts probably with a complex made of MBD7, IDM1, IDM2 and IDM3. Interacts with APE1L. Requires [4Fe-4S] cluster as cofactor. Expressed ubiquitously in both vegetative and reproductive organs.

Its subcellular location is the nucleus. The protein resides in the nucleolus. The enzyme catalyses 2'-deoxyribonucleotide-(2'-deoxyribose 5'-phosphate)-2'-deoxyribonucleotide-DNA = a 3'-end 2'-deoxyribonucleotide-(2,3-dehydro-2,3-deoxyribose 5'-phosphate)-DNA + a 5'-end 5'-phospho-2'-deoxyribonucleoside-DNA + H(+). With respect to regulation, stimulated by ZDP. Stimulated by XRCC1. In terms of biological role, bifunctional DNA glycosylase/lyase, which excises 5-methylcytosine (5-meC) and 5-hydroxymethylcytosine (5-hmeC), leaving an apyrimidinic (AP) site that is subsequently incised by the lyase activity. Generates 3'-phosphor-alpha,beta-unsaturated aldehyde (3'-PUA) as a primary 5-meC excision intermediate. Prevents DNA hypermethylation, specifically in the promoter of otherwise silenced loci. May be involved in DNA repair through its nicking activity on methylated DNA. Binds with similar affinity to both methylated and non-methylated DNA. Highly distributive behavior on DNA substrates containing multiple 5-meC residues. Involved with Pol IV in the remodeling of the 5S rDNA chromatin via DNA methylation modifications during the first days of development post-germination. Participates in UV-B induced- and oxidative DNA damage repair. The chain is DNA glycosylase/AP lyase ROS1 from Arabidopsis thaliana (Mouse-ear cress).